A 489-amino-acid chain; its full sequence is Tyrosine-protein phosphatase MSG5 (489 aa).

Over residues 1-18 (MQFHSDKQHLDSKTDIDF) the composition is skewed to basic and acidic residues. The disordered stretch occupies residues 1-30 (MQFHSDKQHLDSKTDIDFKPNSPRSLQNRN). Phosphoserine occurs at positions 22, 98, and 151. Phosphothreonine is present on Thr-178. A Tyrosine-protein phosphatase domain is found at 233 to 375 (GPLLVLPPNL…LMEWGTMLSK (143 aa)). Catalysis depends on Cys-319, which acts as the Phosphocysteine intermediate. Disordered stretches follow at residues 375 to 401 (KNSP…VSST) and 419 to 489 (LSSS…MFLP). Low complexity predominate over residues 419–450 (LSSSPNDSSVNSSEVTPRTPATLTGARTALAT). Basic and acidic residues predominate over residues 451–460 (ERGEDDEHCK).

Belongs to the protein-tyrosine phosphatase family. Non-receptor class dual specificity subfamily.

The enzyme catalyses O-phospho-L-tyrosyl-[protein] + H2O = L-tyrosyl-[protein] + phosphate. In terms of biological role, dual specificity phosphatase that dephosphorylates MAP kinase FUS3 on both a Tyr and a Ser or Thr. Has a role in adaptation to pheromone. The protein is Tyrosine-protein phosphatase MSG5 (MSG5) of Saccharomyces cerevisiae (strain ATCC 204508 / S288c) (Baker's yeast).